A 209-amino-acid chain; its full sequence is Imidazole glycerol phosphate synthase subunit HisH (209 aa).

Positions 1–205 (MIAIIDYGMG…KGVVETWKSS (205 aa)) constitute a Glutamine amidotransferase type-1 domain. The active-site Nucleophile is the Cys79. Residues His180 and Glu182 contribute to the active site.

In terms of assembly, heterodimer of HisH and HisF.

It is found in the cytoplasm. The enzyme catalyses 5-[(5-phospho-1-deoxy-D-ribulos-1-ylimino)methylamino]-1-(5-phospho-beta-D-ribosyl)imidazole-4-carboxamide + L-glutamine = D-erythro-1-(imidazol-4-yl)glycerol 3-phosphate + 5-amino-1-(5-phospho-beta-D-ribosyl)imidazole-4-carboxamide + L-glutamate + H(+). The catalysed reaction is L-glutamine + H2O = L-glutamate + NH4(+). It functions in the pathway amino-acid biosynthesis; L-histidine biosynthesis; L-histidine from 5-phospho-alpha-D-ribose 1-diphosphate: step 5/9. IGPS catalyzes the conversion of PRFAR and glutamine to IGP, AICAR and glutamate. The HisH subunit catalyzes the hydrolysis of glutamine to glutamate and ammonia as part of the synthesis of IGP and AICAR. The resulting ammonia molecule is channeled to the active site of HisF. The sequence is that of Imidazole glycerol phosphate synthase subunit HisH from Bacillus thuringiensis (strain Al Hakam).